The primary structure comprises 480 residues: Cytochrome b-c1 complex subunit 1, mitochondrial (480 aa).

The transit peptide at 1–34 (MAASAVCRAAGAGTRVLLRTRRSPALLRSSDLRG) directs the protein to the mitochondrion. Residues K111 and K138 each carry the N6-acetyllysine modification. The residue at position 163 (K163) is an N6-acetyllysine; alternate. The residue at position 163 (K163) is an N6-succinyllysine; alternate. At S212 the chain carries Phosphoserine. N6-acetyllysine is present on K248.

This sequence belongs to the peptidase M16 family. UQCRC1/QCR1 subfamily. As to quaternary structure, component of the ubiquinol-cytochrome c oxidoreductase (cytochrome b-c1 complex, complex III, CIII), a multisubunit enzyme composed of 11 subunits. The complex is composed of 3 respiratory subunits cytochrome b, cytochrome c1 and Rieske protein UQCRFS1, 2 core protein subunits UQCRC1/QCR1 and UQCRC2/QCR2, and 6 low-molecular weight protein subunits UQCRH/QCR6, UQCRB/QCR7, UQCRQ/QCR8, UQCR10/QCR9, UQCR11/QCR10 and subunit 9, the cleavage product of Rieske protein UQCRFS1. The complex exists as an obligatory dimer and forms supercomplexes (SCs) in the inner mitochondrial membrane with NADH-ubiquinone oxidoreductase (complex I, CI) and cytochrome c oxidase (complex IV, CIV), resulting in different assemblies (supercomplex SCI(1)III(2)IV(1) and megacomplex MCI(2)III(2)IV(2)). Interacts with UQCC6. Interacts with STMP1.

The protein resides in the mitochondrion inner membrane. In terms of biological role, component of the ubiquinol-cytochrome c oxidoreductase, a multisubunit transmembrane complex that is part of the mitochondrial electron transport chain which drives oxidative phosphorylation. The respiratory chain contains 3 multisubunit complexes succinate dehydrogenase (complex II, CII), ubiquinol-cytochrome c oxidoreductase (cytochrome b-c1 complex, complex III, CIII) and cytochrome c oxidase (complex IV, CIV), that cooperate to transfer electrons derived from NADH and succinate to molecular oxygen, creating an electrochemical gradient over the inner membrane that drives transmembrane transport and the ATP synthase. The cytochrome b-c1 complex catalyzes electron transfer from ubiquinol to cytochrome c, linking this redox reaction to translocation of protons across the mitochondrial inner membrane, with protons being carried across the membrane as hydrogens on the quinol. In the process called Q cycle, 2 protons are consumed from the matrix, 4 protons are released into the intermembrane space and 2 electrons are passed to cytochrome c. The 2 core subunits UQCRC1/QCR1 and UQCRC2/QCR2 are homologous to the 2 mitochondrial-processing peptidase (MPP) subunits beta-MPP and alpha-MPP respectively, and they seem to have preserved their MPP processing properties. May be involved in the in situ processing of UQCRFS1 into the mature Rieske protein and its mitochondrial targeting sequence (MTS)/subunit 9 when incorporated into complex III. Seems to play an important role in the maintenance of proper mitochondrial function in nigral dopaminergic neurons. This chain is Cytochrome b-c1 complex subunit 1, mitochondrial (UQCRC1), found in Bos taurus (Bovine).